Here is a 385-residue protein sequence, read N- to C-terminus: Homoserine O-succinyltransferase (385 aa).

The AB hydrolase-1 domain occupies 46–355 (NAILICHALS…NSQHGHDAFL (310 aa)). Catalysis depends on Ser-151, which acts as the Nucleophile. Arg-221 contacts substrate. Catalysis depends on residues Asp-318 and His-351. Position 352 (Asp-352) interacts with substrate.

The protein belongs to the AB hydrolase superfamily. MetX family. In terms of assembly, homodimer.

The protein resides in the cytoplasm. It catalyses the reaction L-homoserine + succinyl-CoA = O-succinyl-L-homoserine + CoA. Its pathway is amino-acid biosynthesis; L-methionine biosynthesis via de novo pathway; O-succinyl-L-homoserine from L-homoserine: step 1/1. Functionally, transfers a succinyl group from succinyl-CoA to L-homoserine, forming succinyl-L-homoserine. The sequence is that of Homoserine O-succinyltransferase from Hydrogenovibrio crunogenus (strain DSM 25203 / XCL-2) (Thiomicrospira crunogena).